The chain runs to 436 residues: Gamma-glutamyl phosphate reductase (436 aa).

The protein belongs to the gamma-glutamyl phosphate reductase family.

Its subcellular location is the cytoplasm. The catalysed reaction is L-glutamate 5-semialdehyde + phosphate + NADP(+) = L-glutamyl 5-phosphate + NADPH + H(+). Its pathway is amino-acid biosynthesis; L-proline biosynthesis; L-glutamate 5-semialdehyde from L-glutamate: step 2/2. In terms of biological role, catalyzes the NADPH-dependent reduction of L-glutamate 5-phosphate into L-glutamate 5-semialdehyde and phosphate. The product spontaneously undergoes cyclization to form 1-pyrroline-5-carboxylate. This chain is Gamma-glutamyl phosphate reductase, found in Polaromonas sp. (strain JS666 / ATCC BAA-500).